Here is a 319-residue protein sequence, read N- to C-terminus: tRNA dimethylallyltransferase (319 aa).

Residue 26–33 participates in ATP binding; sequence GPTAAGKS. 28 to 33 serves as a coordination point for substrate; that stretch reads TAAGKS. The interval 51–54 is interaction with substrate tRNA; that stretch reads DSMQ.

It belongs to the IPP transferase family. Monomer. It depends on Mg(2+) as a cofactor.

The enzyme catalyses adenosine(37) in tRNA + dimethylallyl diphosphate = N(6)-dimethylallyladenosine(37) in tRNA + diphosphate. Its function is as follows. Catalyzes the transfer of a dimethylallyl group onto the adenine at position 37 in tRNAs that read codons beginning with uridine, leading to the formation of N6-(dimethylallyl)adenosine (i(6)A). In Salinispora tropica (strain ATCC BAA-916 / DSM 44818 / JCM 13857 / NBRC 105044 / CNB-440), this protein is tRNA dimethylallyltransferase.